A 166-amino-acid chain; its full sequence is Small ribosomal subunit protein uS5 (166 aa).

The S5 DRBM domain occupies 11-74; it reads LIDKVVHISR…ESAKRTMFEV (64 aa).

It belongs to the universal ribosomal protein uS5 family. As to quaternary structure, part of the 30S ribosomal subunit. Contacts proteins S4 and S8.

In terms of biological role, with S4 and S12 plays an important role in translational accuracy. Located at the back of the 30S subunit body where it stabilizes the conformation of the head with respect to the body. This is Small ribosomal subunit protein uS5 from Syntrophobacter fumaroxidans (strain DSM 10017 / MPOB).